The chain runs to 150 residues: 3-hydroxyacyl-[acyl-carrier-protein] dehydratase FabZ (150 aa).

His51 is an active-site residue.

The protein belongs to the thioester dehydratase family. FabZ subfamily.

The protein localises to the cytoplasm. It carries out the reaction a (3R)-hydroxyacyl-[ACP] = a (2E)-enoyl-[ACP] + H2O. In terms of biological role, involved in unsaturated fatty acids biosynthesis. Catalyzes the dehydration of short chain beta-hydroxyacyl-ACPs and long chain saturated and unsaturated beta-hydroxyacyl-ACPs. This is 3-hydroxyacyl-[acyl-carrier-protein] dehydratase FabZ from Rubrobacter xylanophilus (strain DSM 9941 / JCM 11954 / NBRC 16129 / PRD-1).